We begin with the raw amino-acid sequence, 295 residues long: UDP-3-O-acyl-N-acetylglucosamine deacetylase (295 aa).

Zn(2+)-binding residues include histidine 75, histidine 232, and aspartate 236. Histidine 259 serves as the catalytic Proton donor.

The protein belongs to the LpxC family. It depends on Zn(2+) as a cofactor.

It catalyses the reaction a UDP-3-O-[(3R)-3-hydroxyacyl]-N-acetyl-alpha-D-glucosamine + H2O = a UDP-3-O-[(3R)-3-hydroxyacyl]-alpha-D-glucosamine + acetate. It participates in glycolipid biosynthesis; lipid IV(A) biosynthesis; lipid IV(A) from (3R)-3-hydroxytetradecanoyl-[acyl-carrier-protein] and UDP-N-acetyl-alpha-D-glucosamine: step 2/6. Functionally, catalyzes the hydrolysis of UDP-3-O-myristoyl-N-acetylglucosamine to form UDP-3-O-myristoylglucosamine and acetate, the committed step in lipid A biosynthesis. This Helicobacter pylori (strain ATCC 700392 / 26695) (Campylobacter pylori) protein is UDP-3-O-acyl-N-acetylglucosamine deacetylase.